The primary structure comprises 411 residues: Serine hydroxymethyltransferase (411 aa).

(6S)-5,6,7,8-tetrahydrofolate is bound by residues Leu113 and 117–119; that span reads GHL. Position 222 is an N6-(pyridoxal phosphate)lysine (Lys222). 346 to 348 provides a ligand contact to (6S)-5,6,7,8-tetrahydrofolate; the sequence is SPF.

Belongs to the SHMT family. In terms of assembly, homodimer. Pyridoxal 5'-phosphate is required as a cofactor.

It is found in the cytoplasm. The catalysed reaction is (6R)-5,10-methylene-5,6,7,8-tetrahydrofolate + glycine + H2O = (6S)-5,6,7,8-tetrahydrofolate + L-serine. It participates in one-carbon metabolism; tetrahydrofolate interconversion. The protein operates within amino-acid biosynthesis; glycine biosynthesis; glycine from L-serine: step 1/1. Functionally, catalyzes the reversible interconversion of serine and glycine with tetrahydrofolate (THF) serving as the one-carbon carrier. This reaction serves as the major source of one-carbon groups required for the biosynthesis of purines, thymidylate, methionine, and other important biomolecules. Also exhibits THF-independent aldolase activity toward beta-hydroxyamino acids, producing glycine and aldehydes, via a retro-aldol mechanism. The chain is Serine hydroxymethyltransferase from Prochlorococcus marinus (strain NATL2A).